Here is an 87-residue protein sequence, read N- to C-terminus: Large ribosomal subunit protein bL27 (87 aa).

The protein belongs to the bacterial ribosomal protein bL27 family.

The polypeptide is Large ribosomal subunit protein bL27 (Phocaeicola vulgatus (strain ATCC 8482 / DSM 1447 / JCM 5826 / CCUG 4940 / NBRC 14291 / NCTC 11154) (Bacteroides vulgatus)).